A 351-amino-acid chain; its full sequence is MLKFIQNNREGTALLAILTLFALLGIIDRNYFSLQTFTMIFSSAQILILLAIGATLVMLTRNIDVSVGSITGLCAVTVGMALNAGFGLVASCLFALLVGMVAGFFNGILVTWLRIPAIVATLGTLGLYRGLMLLLTGGKWIEGLPADLKSLSTPILFSISPIGWLTMLLILSMAWLLGNTAFGRSFYATGDNLQGARQLGVRTDSIRIFAFSMNGVMAALAGIVFASQIGFIPNQTGNGLEMKAIAACVLGGISLLGGTGTIIGAILGAFLLTQIDSVLVLLRLPAWWNDFIAGLVLLGVLVFDGRLRCAVERNIRQQKYARFTAQAIISDKKPTVSDNNPAASNKKKAAL.

Helical transmembrane passes span 14 to 34, 39 to 59, 70 to 90, 93 to 113, 115 to 135, 155 to 175, 213 to 233, 252 to 272, and 284 to 304; these read LLAI…YFSL, MIFS…LVML, ITGL…GLVA, LFAL…VTWL, IPAI…MLLL, ILFS…SMAW, MNGV…GFIP, GISL…AFLL, and LPAW…LVFD.

It belongs to the binding-protein-dependent transport system permease family. AraH/RbsC subfamily. In terms of assembly, the complex is composed of two ATP-binding proteins (LsrA), two transmembrane proteins (LsrC and LsrD) and a solute-binding protein (LsrB).

The protein localises to the cell inner membrane. Functionally, part of the ABC transporter complex LsrABCD involved in autoinducer 2 (AI-2) import. Probably responsible for the translocation of the substrate across the membrane. This is Autoinducer 2 import system permease protein LsrC (lsrC) from Yersinia pseudotuberculosis serotype IB (strain PB1/+).